The sequence spans 405 residues: Serpin I2 (405 aa).

The signal sequence occupies residues 1–18; sequence MNKTILWSFLLFFSGSQT. N-linked (GlcNAc...) asparagine glycosylation occurs at Asn306.

This sequence belongs to the serpin family. Expressed in pancreas.

The protein localises to the secreted. This Mus musculus (Mouse) protein is Serpin I2 (Serpini2).